The primary structure comprises 390 residues: Glutamyl-tRNA reductase (390 aa).

Substrate contacts are provided by residues 46–49 (TCNR), S96, 101–103 (EAQ), and Q107. C47 acts as the Nucleophile in catalysis. Position 176 to 181 (176 to 181 (GAGEMA)) interacts with NADP(+).

The protein belongs to the glutamyl-tRNA reductase family. Homodimer.

It carries out the reaction (S)-4-amino-5-oxopentanoate + tRNA(Glu) + NADP(+) = L-glutamyl-tRNA(Glu) + NADPH + H(+). The protein operates within porphyrin-containing compound metabolism; protoporphyrin-IX biosynthesis; 5-aminolevulinate from L-glutamyl-tRNA(Glu): step 1/2. Catalyzes the NADPH-dependent reduction of glutamyl-tRNA(Glu) to glutamate 1-semialdehyde (GSA). This chain is Glutamyl-tRNA reductase, found in Thermus thermophilus (strain ATCC 27634 / DSM 579 / HB8).